Here is a 65-residue protein sequence, read N- to C-terminus: Large ribosomal subunit protein bL35 (65 aa).

3 stretches are compositionally biased toward basic residues: residues 1 to 18, 31 to 44, and 55 to 65; these read MPKM…KRTA, HRFH…RRQL, and VKRYKKMIPAK. Residues 1–65 form a disordered region; that stretch reads MPKMKTKSAA…KRYKKMIPAK (65 aa).

This sequence belongs to the bacterial ribosomal protein bL35 family.

In Limosilactobacillus fermentum (strain NBRC 3956 / LMG 18251) (Lactobacillus fermentum), this protein is Large ribosomal subunit protein bL35.